The primary structure comprises 253 residues: Triosephosphate isomerase (253 aa).

Substrate is bound at residue 8–10 (NWK). Histidine 91 (electrophile) is an active-site residue. Glutamate 168 acts as the Proton acceptor in catalysis. Substrate is bound by residues glycine 174, serine 213, and 234–235 (GG).

The protein belongs to the triosephosphate isomerase family. In terms of assembly, homodimer.

It localises to the cytoplasm. It carries out the reaction D-glyceraldehyde 3-phosphate = dihydroxyacetone phosphate. It participates in carbohydrate biosynthesis; gluconeogenesis. The protein operates within carbohydrate degradation; glycolysis; D-glyceraldehyde 3-phosphate from glycerone phosphate: step 1/1. Involved in the gluconeogenesis. Catalyzes stereospecifically the conversion of dihydroxyacetone phosphate (DHAP) to D-glyceraldehyde-3-phosphate (G3P). This chain is Triosephosphate isomerase, found in Acidiphilium cryptum (strain JF-5).